Reading from the N-terminus, the 441-residue chain is G-protein coupled receptor family C group 5 member C (441 aa).

The signal sequence occupies residues M1–A23. The Extracellular segment spans residues Q24–G50. The helical transmembrane segment at I51–L71 threads the bilayer. The Cytoplasmic segment spans residues V72–S85. A helical transmembrane segment spans residues L86–A106. Residues C107–R120 are Extracellular-facing. A helical membrane pass occupies residues F121–L141. Topologically, residues N142–V155 are cytoplasmic. A helical membrane pass occupies residues I156–I176. At I177 to D208 the chain is on the extracellular side. Residue N191 is glycosylated (N-linked (GlcNAc...) asparagine). Residues F209–P229 traverse the membrane as a helical segment. At A230 to H241 the chain is on the cytoplasmic side. A helical membrane pass occupies residues G242–M262. Residues Y263–T279 are Extracellular-facing. A helical membrane pass occupies residues L280–V300. At S301 to D441 the chain is on the cytoplasmic side. Residues S344, S383, S403, and S406 each carry the phosphoserine modification. The tract at residues D412–D441 is disordered. Residue Y414 is modified to Phosphotyrosine. At T423 the chain carries Phosphothreonine.

It belongs to the G-protein coupled receptor 3 family. Expression is highest in the periphery, particularly in the stomach, but also in the kidney, liver, pancreas, and prostate. In brain, levels of expression are generally lower than in the periphery, with the exception of cerebellum, spinal cord, and dorsal root ganglia (DRG).

The protein resides in the cell membrane. It localises to the cytoplasmic vesicle membrane. Functionally, this retinoic acid-inducible G-protein coupled receptor provide evidence for a possible interaction between retinoid and G-protein signaling pathways. In Homo sapiens (Human), this protein is G-protein coupled receptor family C group 5 member C (GPRC5C).